Consider the following 206-residue polypeptide: Holliday junction branch migration complex subunit RuvA (206 aa).

Positions Met1–Asn64 are domain I. Residues Lys65–Pro143 form a domain II region. A flexible linker region spans residues Ala144–Tyr157. Residues Ser158 to Val206 form a domain III region.

It belongs to the RuvA family. Homotetramer. Forms an RuvA(8)-RuvB(12)-Holliday junction (HJ) complex. HJ DNA is sandwiched between 2 RuvA tetramers; dsDNA enters through RuvA and exits via RuvB. An RuvB hexamer assembles on each DNA strand where it exits the tetramer. Each RuvB hexamer is contacted by two RuvA subunits (via domain III) on 2 adjacent RuvB subunits; this complex drives branch migration. In the full resolvosome a probable DNA-RuvA(4)-RuvB(12)-RuvC(2) complex forms which resolves the HJ.

Its subcellular location is the cytoplasm. In terms of biological role, the RuvA-RuvB-RuvC complex processes Holliday junction (HJ) DNA during genetic recombination and DNA repair, while the RuvA-RuvB complex plays an important role in the rescue of blocked DNA replication forks via replication fork reversal (RFR). RuvA specifically binds to HJ cruciform DNA, conferring on it an open structure. The RuvB hexamer acts as an ATP-dependent pump, pulling dsDNA into and through the RuvAB complex. HJ branch migration allows RuvC to scan DNA until it finds its consensus sequence, where it cleaves and resolves the cruciform DNA. The chain is Holliday junction branch migration complex subunit RuvA from Photobacterium profundum (strain SS9).